Here is a 570-residue protein sequence, read N- to C-terminus: Phosphoenolpyruvate-protein phosphotransferase (570 aa).

His-189 (tele-phosphohistidine intermediate) is an active-site residue. 2 residues coordinate phosphoenolpyruvate: Arg-296 and Arg-332. Residues Glu-431 and Asp-455 each coordinate Mg(2+). Phosphoenolpyruvate is bound by residues 454 to 455 and Arg-465; that span reads ND. Residue Cys-502 is the Proton donor of the active site.

This sequence belongs to the PEP-utilizing enzyme family. In terms of assembly, homodimer. Interacts with FloT. It depends on Mg(2+) as a cofactor.

The protein localises to the cytoplasm. The protein resides in the membrane raft. The enzyme catalyses L-histidyl-[protein] + phosphoenolpyruvate = N(pros)-phospho-L-histidyl-[protein] + pyruvate. General (non sugar-specific) component of the phosphoenolpyruvate-dependent sugar phosphotransferase system (sugar PTS). This major carbohydrate active-transport system catalyzes the phosphorylation of incoming sugar substrates concomitantly with their translocation across the cell membrane. Enzyme I transfers the phosphoryl group from phosphoenolpyruvate (PEP) to the phosphoryl carrier protein (HPr). The protein is Phosphoenolpyruvate-protein phosphotransferase (ptsI) of Bacillus subtilis (strain 168).